A 418-amino-acid polypeptide reads, in one-letter code: MSIEIPAGLTELLQGFTVEVLRHQPADLLEFALQHFTRLQQENERKGTARFGHEGRTWGDLGAAAGGGTPSKGVNFAEEPMQSDSEDGEEEEAAPADAGAFNAPVINRFTRRASVCAEAYNPDEEEDDAESRIIHPKTDDQRNRLQEACKDILLFKNLDPEQMSQVLDAMFEKLVKDGEHVIDQGDDGDNFYVIDRGTFDIYVKCDGVGRCVGNYDNRGSFGELALMYNTPRAATITATSPGALWGLDRVTFRRIIVKNNAKKRKMYESFIESLPFLKSLEFSERLKVVDVIGTKVYNDGEQIIAQGDSADSFFIVESGEVKITMKRKGKSEVEENGAVEIARCSRGQYFGELALVTNKPRAASAHAIGTVKCLAMDVQAFERLLGPCMEIMKRNIATYEEQLVALFGTNMDIVEPTA.

Residues 2 to 153 (SIEIPAGLTE…RLQEACKDIL (152 aa)) are dimerization and phosphorylation. Positions 48-57 (TARFGHEGRT) are enriched in basic and acidic residues. Residues 48–96 (TARFGHEGRTWGDLGAAAGGGTPSKGVNFAEEPMQSDSEDGEEEEAAPA) are disordered. Position 69 is a phosphothreonine (Thr-69). Phosphoserine occurs at positions 83, 85, and 114. Residues 84–94 (DSEDGEEEEAA) are compositionally biased toward acidic residues. 3',5'-cyclic AMP is bound by residues 154–275 (LFKN…ESLP), Glu-223, Arg-232, 276–418 (FLKS…EPTA), Glu-352, and Arg-361.

This sequence belongs to the cAMP-dependent kinase regulatory chain family. The inactive form of the enzyme is composed of two regulatory chains and two catalytic chains. Activation by cAMP produces two active catalytic monomers and a regulatory dimer that binds four cAMP molecules. Interacts with PRKACA and PRKACB. Interacts with the phosphorylated form of PJA2. Forms a complex composed of PRKAR2B, GSK3B and GSKIP through GSKIP interaction; facilitates PKA-induced phosphorylation and regulates GSK3B activity. In terms of processing, phosphorylated by the activated catalytic chain. Four types of regulatory chains are found: I-alpha, I-beta, II-alpha, and II-beta. Their expression varies among tissues and is in some cases constitutive and in others inducible.

The protein localises to the cytoplasm. Its subcellular location is the cell membrane. Its function is as follows. Regulatory subunit of the cAMP-dependent protein kinases involved in cAMP signaling in cells. Type II regulatory chains mediate membrane association by binding to anchoring proteins, including the MAP2 kinase. The chain is cAMP-dependent protein kinase type II-beta regulatory subunit (PRKAR2B) from Homo sapiens (Human).